Here is a 334-residue protein sequence, read N- to C-terminus: Flotillin-like protein FloA (334 aa).

The chain crosses the membrane as a helical span at residues 3-23; that stretch reads LYLIFLIVVGVVGLVLVGLFL.

This sequence belongs to the flotillin-like FloA family. As to quaternary structure, homooligomerizes.

The protein localises to the cell membrane. Its subcellular location is the membrane raft. In terms of biological role, found in functional membrane microdomains (FMM) that may be equivalent to eukaryotic membrane rafts. FMMs are highly dynamic and increase in number as cells age. Flotillins are thought to be important factors in membrane fluidity. In Opitutus terrae (strain DSM 11246 / JCM 15787 / PB90-1), this protein is Flotillin-like protein FloA.